Consider the following 146-residue polypeptide: Large ribosomal subunit protein uL15 (146 aa).

Residues 1-57 (MDLSNLKAAEGSVHSDNFRRGRGHGSGNGKTAGKGHKGQKARSGAPRPGFEGGQMPL) are disordered.

Belongs to the universal ribosomal protein uL15 family. In terms of assembly, part of the 50S ribosomal subunit.

Functionally, binds to the 23S rRNA. This is Large ribosomal subunit protein uL15 from Agathobacter rectalis (strain ATCC 33656 / DSM 3377 / JCM 17463 / KCTC 5835 / VPI 0990) (Eubacterium rectale).